The following is a 73-amino-acid chain: Toxin Td12 (73 aa).

The N-terminal stretch at 1-7 (IGMVIEC) is a signal peptide. One can recognise an LCN-type CS-alpha/beta domain in the interval 8–70 (KDGYLMEPNG…TWDRATNTCG (63 aa)). 4 disulfides stabilise this stretch: Cys-18–Cys-69, Cys-22–Cys-44, Cys-30–Cys-50, and Cys-34–Cys-52. Residue Arg-71 is modified to Arginine amide.

It belongs to the long (4 C-C) scorpion toxin superfamily. Sodium channel inhibitor family. Beta subfamily. In terms of tissue distribution, expressed by the venom gland.

It is found in the secreted. Its function is as follows. Beta toxins bind voltage-independently at site-4 of sodium channels (Nav) and shift the voltage of activation toward more negative potentials thereby affecting sodium channel activation and promoting spontaneous and repetitive firing. The chain is Toxin Td12 from Tityus discrepans (Venezuelan scorpion).